Reading from the N-terminus, the 67-residue chain is Conotoxin TsMMSK-011 (67 aa).

The signal sequence occupies residues 1 to 22 (MMSKLGVLLTICLLLFPLTVLP). Residues 23 to 50 (MDGDQPADLPALRTQDIATDQSPWFDPV) constitute a propeptide that is removed on maturation. 3 cysteine pairs are disulfide-bonded: C53/C65, C54/C61, and C58/C64. P63 is modified (4-hydroxyproline).

It belongs to the conotoxin M superfamily. Expressed by the venom duct.

The protein localises to the secreted. In Conus tessulatus (Tessellate cone), this protein is Conotoxin TsMMSK-011.